Here is a 550-residue protein sequence, read N- to C-terminus: Nucleoside hydrolase 4 (550 aa).

This sequence belongs to the IUNH family.

The protein resides in the cytoplasm. Its function is as follows. May be involved in the degradation of nucleosides. The chain is Nucleoside hydrolase 4 from Arabidopsis thaliana (Mouse-ear cress).